Here is an 809-residue protein sequence, read N- to C-terminus: Putative zinc metalloprotease TRE2 (809 aa).

2 stretches are compositionally biased toward polar residues: residues 1–12 and 20–30; these read MRSSYQPVSTTN and PTASSSHNLLM. Positions 1–66 are disordered; sequence MRSSYQPVST…PSYEFDIEDP (66 aa). Over 1 to 125 the chain is Cytoplasmic; that stretch reads MRSSYQPVST…KIGNPFILRR (125 aa). The segment covering 37-50 has biased composition (low complexity); the sequence is SPPSSNDNSIETNI. The chain crosses the membrane as a helical; Signal-anchor for type II membrane protein span at residues 126 to 146; the sequence is FFYIIFMSFIAYYVLSSGYLF. The Extracellular segment spans residues 147-809; it reads NEKASGSKGM…VEETNDIGYK (663 aa). N-linked (GlcNAc...) asparagine glycosylation occurs at asparagine 228. Residues 255–349 enclose the PA domain; that stretch reads SNGKLSKVSL…STGDASGLNW (95 aa). 2 N-linked (GlcNAc...) asparagine glycosylation sites follow: asparagine 669 and asparagine 736.

The protein belongs to the peptidase M28 family. M28B subfamily.

It is found in the membrane. The chain is Putative zinc metalloprotease TRE2 (TRE2) from Saccharomyces cerevisiae (strain ATCC 204508 / S288c) (Baker's yeast).